The chain runs to 224 residues: Lipoprotein-releasing system ATP-binding protein LolD (224 aa).

The ABC transporter domain maps to 5-224 (LEILDVSKCY…SLSGGMLTEL (220 aa)). 40–47 (GSSGSGKS) contacts ATP.

Belongs to the ABC transporter superfamily. Lipoprotein translocase (TC 3.A.1.125) family. The complex is composed of two ATP-binding proteins (LolD) and two transmembrane proteins (LolC and LolE).

It is found in the cell inner membrane. Its function is as follows. Part of the ABC transporter complex LolCDE involved in the translocation of mature outer membrane-directed lipoproteins, from the inner membrane to the periplasmic chaperone, LolA. Responsible for the formation of the LolA-lipoprotein complex in an ATP-dependent manner. The polypeptide is Lipoprotein-releasing system ATP-binding protein LolD (Anaplasma marginale (strain St. Maries)).